Reading from the N-terminus, the 278-residue chain is Putative pyruvate, phosphate dikinase regulatory protein (278 aa).

149–156 (GVSRSSKT) contributes to the ADP binding site.

Belongs to the pyruvate, phosphate/water dikinase regulatory protein family. PDRP subfamily.

The enzyme catalyses N(tele)-phospho-L-histidyl/L-threonyl-[pyruvate, phosphate dikinase] + ADP = N(tele)-phospho-L-histidyl/O-phospho-L-threonyl-[pyruvate, phosphate dikinase] + AMP + H(+). The catalysed reaction is N(tele)-phospho-L-histidyl/O-phospho-L-threonyl-[pyruvate, phosphate dikinase] + phosphate + H(+) = N(tele)-phospho-L-histidyl/L-threonyl-[pyruvate, phosphate dikinase] + diphosphate. Functionally, bifunctional serine/threonine kinase and phosphorylase involved in the regulation of the pyruvate, phosphate dikinase (PPDK) by catalyzing its phosphorylation/dephosphorylation. This is Putative pyruvate, phosphate dikinase regulatory protein from Erythrobacter litoralis (strain HTCC2594).